The following is an 82-amino-acid chain: MKKGIHPTYREVVFLDTSSNFKFLTRSTLNSRETIKWEDGQEYPLIKVELSSASHPFYTGKKIFVDTAGRVEKFQQKYKKRS.

The protein belongs to the bacterial ribosomal protein bL31 family. Type B subfamily. Part of the 50S ribosomal subunit.

The protein is Large ribosomal subunit protein bL31B of Amoebophilus asiaticus (strain 5a2).